The primary structure comprises 628 residues: Rac GTPase-activating protein 1 (628 aa).

Methionine 1 bears the N-acetylmethionine mark. Residues 33–110 (QVVKDFEDFR…IQLIRDILMC (78 aa)) adopt a coiled-coil conformation. An interaction with SLC26A8 region spans residues 107–286 (ILMCDTSGSI…GTPQNTGGMR (180 aa)). The residue at position 150 (serine 150) is a Phosphoserine; by PLK1. Serine 155 is modified (phosphoserine). Serine 158 carries the post-translational modification Phosphoserine; by PLK1. The residue at position 162 (threonine 162) is a Phosphothreonine. Phosphoserine; by PLK1 occurs at positions 165 and 171. A disordered region spans residues 179–201 (KKREKRRSNSRQFIDGPPGPVKK). Phosphoserine is present on residues serine 204, serine 207, and serine 215. Positions 242 to 284 (SWTRSRGKSGPLQPVNSDSALNSRPLEPRTDTDNLGTPQNTGG) are disordered. Residue lysine 249 forms a Glycyl lysine isopeptide (Lys-Gly) (interchain with G-Cter in SUMO2) linkage. Residue serine 258 is modified to Phosphoserine. Polar residues predominate over residues 274 to 283 (DNLGTPQNTG). The segment at 287-336 (LHDFVSKTVIKPESCVPCGKRIKFGKLSLKCRDCRLVSHPECRDRCPLPC) adopts a Phorbol-ester/DAG-type zinc-finger fold. Threonine 343 bears the Phosphothreonine mark. Residues 350–540 (GMLADFVSQA…RLLSLPLEYW (191 aa)) form the Rho-GAP domain. At serine 388 the chain carries Phosphoserine; by AURKB. A Glycyl lysine isopeptide (Lys-Gly) (interchain with G-Cter in SUMO2) cross-link involves residue lysine 405. Residue serine 411 is modified to Phosphoserine; by AURKB. Threonine 564, threonine 577, threonine 585, and threonine 602 each carry phosphothreonine.

Heterotetramer of two molecules each of RACGAP1 and KIF23. Found in the centralspindlin complex. Associates with alpha-, beta- and gamma-tubulin and microtubules. Interacts via its Rho-GAP domain with RND2. Associates with AURKB during M phase. Interacts via its Rho-GAP domain and basic region with PRC1. The interaction with PRC1 inhibits its GAP activity towards CDC42 in vitro, which may be required for maintaining normal spindle morphology. Interacts with SLC26A8 via its N-terminus. Interacts with ECT2; the interaction is direct, occurs at anaphase and during cytokinesis in a microtubule-dependent manner, is enhanced by phosphorylation by PLK1 and phosphorylation at Ser-165 plays a major role in mediating binding. Interacts with RAB11FIP3; the interaction occurs at late telophase. Interacts with KIF23; the interaction is direct. In terms of processing, phosphorylated at multiple sites in the midbody during cytokinesis. Phosphorylation by AURKB on Ser-388 at the midbody is, at least in part, responsible for exerting its latent GAP activity towards RhoA. Phosphorylation on multiple serine residues by PLK1 enhances its association with ECT2 and is critical for cleavage furrow formation. Phosphorylation on Ser-165 plays a major role in mediating interaction with ECT2. Phosphorylation on Ser-158 does not appear to contribute to binding to ECT2. Highly expressed in testis, thymus and spleen and weakly expressed in brain, heart, skeletal muscle and kidney. In testis, expression is restricted to germ cells with the highest levels of expression found in spermatocytes. Not detected in adult liver. Also expressed in fetal liver and in several hematopoietic cell lines.

It localises to the nucleus. It is found in the cytoplasm. The protein localises to the cytoskeleton. Its subcellular location is the spindle. The protein resides in the cytoplasmic vesicle. It localises to the secretory vesicle. It is found in the acrosome. The protein localises to the cleavage furrow. Its subcellular location is the midbody. The protein resides in the midbody ring. It localises to the cell membrane. Its function is as follows. Component of the centralspindlin complex that serves as a microtubule-dependent and Rho-mediated signaling required for the myosin contractile ring formation during the cell cycle cytokinesis. Required for proper attachment of the midbody to the cell membrane during cytokinesis. Sequentially binds to ECT2 and RAB11FIP3 which regulates cleavage furrow ingression and abscission during cytokinesis. Plays key roles in controlling cell growth and differentiation of hematopoietic cells through mechanisms other than regulating Rac GTPase activity. Has a critical role in erythropoiesis. Also involved in the regulation of growth-related processes in adipocytes and myoblasts. May be involved in regulating spermatogenesis and in the RACGAP1 pathway in neuronal proliferation. Shows strong GAP (GTPase activation) activity towards CDC42 and RAC1 and less towards RHOA. Essential for the early stages of embryogenesis. May play a role in regulating cortical activity through RHOA during cytokinesis. May participate in the regulation of sulfate transport in male germ cells. This is Rac GTPase-activating protein 1 from Mus musculus (Mouse).